Consider the following 474-residue polypeptide: MGGSDFEDDELFKDLYGEENEKKVESASGNQETSNVTPTKENEGYEELEKSGEAGAERTKENPFREEPGADFDRSGSDQQYSAEAEANQEDDLNETSQQAPDPSSYDIRGQALSSATWDNAEDGENSKNDNYNENQSALTGSGAMESNEDNAEETSPFNREDGKMFIGGLNWETTDDSLRDYFEQFGEVLDCTVMRDSTTGRSRGFGFLTFKNPKCVNEVMSKEHHLDGKIIDPKRAIPREEQEKTAKMFVGGVPGDCTEEEFRNFFNQFGRVLDATLMMDKDTGRPRGFGFVTYENESAVEATMSQPYITIHGKPVEVKRATPKASLRDSHDRHQHGYHGNANPYYAQNMNMYGGMTPAMMAQYYRQMQQYMEAMRNMPAAAGAVPYPQPVMPAGMADWQQQQQQGAAYFDPSKMNQGTGDGVPFSPSMPSGSSRGGYHGRNPGGPNRQRYRGRRDGRGGNTGGGHSFHPYRR.

Residues 1–11 (MGGSDFEDDEL) are compositionally biased toward acidic residues. The segment at 1–163 (MGGSDFEDDE…ETSPFNREDG (163 aa)) is disordered. The span at 12 to 25 (FKDLYGEENEKKVE) shows a compositional bias: basic and acidic residues. Polar residues predominate over residues 27–39 (ASGNQETSNVTPT). Positions 40 to 76 (KENEGYEELEKSGEAGAERTKENPFREEPGADFDRSG) are enriched in basic and acidic residues. Residues 129 to 140 (NDNYNENQSALT) are compositionally biased toward polar residues. 2 consecutive RRM domains span residues 163-245 (GKMF…EQEK) and 247-324 (AKMF…RATP). The disordered stretch occupies residues 412-474 (DPSKMNQGTG…GGHSFHPYRR (63 aa)). Positions 425 to 434 (PFSPSMPSGS) are enriched in low complexity. Gly residues predominate over residues 435–444 (SRGGYHGRNP).

Its subcellular location is the nucleus. This is an uncharacterized protein from Schizosaccharomyces pombe (strain 972 / ATCC 24843) (Fission yeast).